A 225-amino-acid chain; its full sequence is NAD(P)H-quinone oxidoreductase subunit K, chloroplastic (225 aa).

Cys43, Cys44, Cys108, and Cys139 together coordinate [4Fe-4S] cluster.

This sequence belongs to the complex I 20 kDa subunit family. In terms of assembly, NDH is composed of at least 16 different subunits, 5 of which are encoded in the nucleus. [4Fe-4S] cluster is required as a cofactor.

It localises to the plastid. The protein localises to the chloroplast thylakoid membrane. It carries out the reaction a plastoquinone + NADH + (n+1) H(+)(in) = a plastoquinol + NAD(+) + n H(+)(out). The enzyme catalyses a plastoquinone + NADPH + (n+1) H(+)(in) = a plastoquinol + NADP(+) + n H(+)(out). In terms of biological role, NDH shuttles electrons from NAD(P)H:plastoquinone, via FMN and iron-sulfur (Fe-S) centers, to quinones in the photosynthetic chain and possibly in a chloroplast respiratory chain. The immediate electron acceptor for the enzyme in this species is believed to be plastoquinone. Couples the redox reaction to proton translocation, and thus conserves the redox energy in a proton gradient. The sequence is that of NAD(P)H-quinone oxidoreductase subunit K, chloroplastic from Barbarea verna (Land cress).